The primary structure comprises 444 residues: E1B 55 kDa protein (444 aa).

The disordered stretch occupies residues 1-42 (MEQDSDLESGRATNQRPPRVRVRGAGVRGRGRVRRRALSEGQ). A phosphoserine mark is found at serine 438 and serine 439.

This sequence belongs to the adenoviridae E1B 55 kDa protein family. In terms of assembly, interacts with host PML-4 and PML-5; this interaction promotes efficient subnuclear targeting of E1B-55K to PML nuclear bodies. Interacts with E4-ORF3 protein. Interacts with E4-ORF6 protein.

Its subcellular location is the host nucleus. It is found in the host cytoplasm. In terms of biological role, plays a major role to prevent cellular inhibition of viral genome replication. Assembles an SCF-like E3 ubiquitin ligase complex based on the cellular proteins ELOB, ELOC, CUL5 and RBX1, in cooperation with viral E4orf6. This viral RING-type ligase ubiquitinates cellular substrates and targets them to proteasomal degradation: TP53/p53, LIG4, MRE11-RAD50-NBS1 (MRN) complex, ITGA3, DAXX and BLM. E1B-55K probably acts as the substrate-specific adapter of the SCF-like E3 ubiquitin ligase complex. Degradation of host TP53/p53 activity is essential for preventing E1A-induced TP53 accumulation that would otherwise lead to cell apoptosis and growth arrest. E1B-55K also inactivates TP53 transcription-factor activity by binding its transactivation domain. E1B-55K also functions as a SUMO1 E3 ligase for TP53 which causes the latter to be sequestered in promyelocytic leukemia (PML) nuclear bodies thereby contributing to maximal inhibition of TP53 function. The sequence is that of E1B 55 kDa protein from Canis lupus familiaris (Dog).